The primary structure comprises 139 residues: ATP synthase epsilon chain (139 aa).

Belongs to the ATPase epsilon chain family. In terms of assembly, F-type ATPases have 2 components, CF(1) - the catalytic core - and CF(0) - the membrane proton channel. CF(1) has five subunits: alpha(3), beta(3), gamma(1), delta(1), epsilon(1). CF(0) has three main subunits: a, b and c.

The protein resides in the cell inner membrane. Functionally, produces ATP from ADP in the presence of a proton gradient across the membrane. In Acinetobacter baumannii (strain AB307-0294), this protein is ATP synthase epsilon chain.